The primary structure comprises 449 residues: MTVIPNVSIDALKNHVGETVRVNAWLTDKSGKGKLQFLKLRDGSGFVQATVFKGDVPEEVFEAARRLSQEQAVRVTGEVRADERAPGGVELAVRDLVPFAANQAEYPITPKEHGIEFLLDHRHLWLRHRRPWAILRVRDCVERAIVEFFHQEGFIRFDAPFFTPNAAEGTTELFEIDLFGEDKAYLSQTGQLHAEAGALAFGKVYTFGPTFRAEKSKTRRHLLEFWMVEPEVAPATHQDNMDLQERLVSFLVRRVLEECAAELAVLGRDVAKLQPAAEGNYPRVTYTEALDIIRRHIAEGDLPPNVQPDVQPVEWGDDLGAPHETILGFHFDRPVIVERYPAAIKAFYMQPDPADPRLALCDDMIAPEGYGEIIGGSERIHDYTLLKARIEGEGLPLSAFDWYLDLRRFGSVPHAGFGMGLERVIAWITGIDHIREAIPFPRMLTRMVP.

This sequence belongs to the class-II aminoacyl-tRNA synthetase family. As to quaternary structure, homodimer.

The protein localises to the cytoplasm. The catalysed reaction is tRNA(Asn) + L-asparagine + ATP = L-asparaginyl-tRNA(Asn) + AMP + diphosphate + H(+). The polypeptide is Asparagine--tRNA ligase (Deinococcus geothermalis (strain DSM 11300 / CIP 105573 / AG-3a)).